The following is a 360-amino-acid chain: Peptide chain release factor 1 (360 aa).

The residue at position 235 (Gln-235) is an N5-methylglutamine. The segment covering 280 to 293 (DKQSHEQQAKEAAT) has biased composition (basic and acidic residues). A disordered region spans residues 280 to 300 (DKQSHEQQAKEAATRKSLIGS).

It belongs to the prokaryotic/mitochondrial release factor family. Post-translationally, methylated by PrmC. Methylation increases the termination efficiency of RF1.

It localises to the cytoplasm. Functionally, peptide chain release factor 1 directs the termination of translation in response to the peptide chain termination codons UAG and UAA. This is Peptide chain release factor 1 from Paraburkholderia phytofirmans (strain DSM 17436 / LMG 22146 / PsJN) (Burkholderia phytofirmans).